We begin with the raw amino-acid sequence, 206 residues long: Small ribosomal subunit protein uS4 (206 aa).

In terms of domain architecture, S4 RNA-binding spans 96 to 156 (SRLDNVVYRM…EKSRNQSRIA (61 aa)).

The protein belongs to the universal ribosomal protein uS4 family. As to quaternary structure, part of the 30S ribosomal subunit. Contacts protein S5. The interaction surface between S4 and S5 is involved in control of translational fidelity.

In terms of biological role, one of the primary rRNA binding proteins, it binds directly to 16S rRNA where it nucleates assembly of the body of the 30S subunit. With S5 and S12 plays an important role in translational accuracy. In Hydrogenovibrio crunogenus (strain DSM 25203 / XCL-2) (Thiomicrospira crunogena), this protein is Small ribosomal subunit protein uS4.